Consider the following 545-residue polypeptide: Coiled-coil domain-containing protein 60 (545 aa).

Residues 72–99 (NILREENAMKKKQQLLQKLKEEELNKFQ) adopt a coiled-coil conformation. A disordered region spans residues 224 to 284 (PAIRTAMASR…DNESSSTKPE (61 aa)). Low complexity predominate over residues 238-259 (RGSTLSLTRTSGGSSPQSSMMS).

The polypeptide is Coiled-coil domain-containing protein 60 (Ccdc60) (Mus musculus (Mouse)).